Reading from the N-terminus, the 212-residue chain is Transcription factor MYB8 (212 aa).

2 HTH myb-type domains span residues 9–61 (KAHM…INYL) and 62–116 (RPDL…KRKL). 2 consecutive DNA-binding regions (H-T-H motif) follow at residues 37-61 (WRSL…INYL) and 89-112 (WSLI…NTHI).

It is found in the nucleus. Transcription activator. This Arabidopsis thaliana (Mouse-ear cress) protein is Transcription factor MYB8.